The sequence spans 448 residues: Chromosomal replication initiator protein DnaA (448 aa).

Residues 1–73 form a domain I, interacts with DnaA modulators region; it reads MNTHLTETWE…VNALKLLTSK (73 aa). Residues 73–109 are domain II; that stretch reads KKYNIDFIVTTEEKIEENQKNHNNEKSNIVVNDEMST. The segment at 110-326 is domain III, AAA+ region; sequence MLNPKYTFDS…GALIRIVAFS (217 aa). 4 residues coordinate ATP: G154, G156, K157, and T158. The domain IV, binds dsDNA stretch occupies residues 327-448; it reads SLTNKEISID…KELNKRINQK (122 aa).

The protein belongs to the DnaA family. As to quaternary structure, oligomerizes as a right-handed, spiral filament on DNA at oriC.

It is found in the cytoplasm. Its function is as follows. Plays an essential role in the initiation and regulation of chromosomal replication. ATP-DnaA binds to the origin of replication (oriC) to initiate formation of the DNA replication initiation complex once per cell cycle. Binds the DnaA box (a 9 base pair repeat at the origin) and separates the double-stranded (ds)DNA. Forms a right-handed helical filament on oriC DNA; dsDNA binds to the exterior of the filament while single-stranded (ss)DNA is stabiized in the filament's interior. The ATP-DnaA-oriC complex binds and stabilizes one strand of the AT-rich DNA unwinding element (DUE), permitting loading of DNA polymerase. After initiation quickly degrades to an ADP-DnaA complex that is not apt for DNA replication. Binds acidic phospholipids. The protein is Chromosomal replication initiator protein DnaA of Clostridium botulinum (strain ATCC 19397 / Type A).